The chain runs to 476 residues: Bifunctional protein HldE (476 aa).

The ribokinase stretch occupies residues 1–319 (MKVSLPAFEK…EALALHHGES (319 aa)). Residue 195 to 198 (NMSE) participates in ATP binding. Asp264 is an active-site residue. The tract at residues 345–476 (MTNGCFDILH…AIIQNIMANQ (132 aa)) is cytidylyltransferase.

This sequence in the N-terminal section; belongs to the carbohydrate kinase PfkB family. It in the C-terminal section; belongs to the cytidylyltransferase family. In terms of assembly, homodimer.

It carries out the reaction D-glycero-beta-D-manno-heptose 7-phosphate + ATP = D-glycero-beta-D-manno-heptose 1,7-bisphosphate + ADP + H(+). The catalysed reaction is D-glycero-beta-D-manno-heptose 1-phosphate + ATP + H(+) = ADP-D-glycero-beta-D-manno-heptose + diphosphate. It functions in the pathway nucleotide-sugar biosynthesis; ADP-L-glycero-beta-D-manno-heptose biosynthesis; ADP-L-glycero-beta-D-manno-heptose from D-glycero-beta-D-manno-heptose 7-phosphate: step 1/4. Its pathway is nucleotide-sugar biosynthesis; ADP-L-glycero-beta-D-manno-heptose biosynthesis; ADP-L-glycero-beta-D-manno-heptose from D-glycero-beta-D-manno-heptose 7-phosphate: step 3/4. In terms of biological role, catalyzes the phosphorylation of D-glycero-D-manno-heptose 7-phosphate at the C-1 position to selectively form D-glycero-beta-D-manno-heptose-1,7-bisphosphate. Its function is as follows. Catalyzes the ADP transfer from ATP to D-glycero-beta-D-manno-heptose 1-phosphate, yielding ADP-D-glycero-beta-D-manno-heptose. The chain is Bifunctional protein HldE from Shewanella baltica (strain OS185).